The primary structure comprises 240 residues: Ornithine decarboxylase antizyme (240 aa).

Disordered regions lie at residues 18 to 45 (RSEPISSSNRATKRTISSSSSSSSSSAG) and 69 to 95 (DHDRASPLKEYNRKTSIDSTTTASSEF). Residues 21–33 (PISSSNRATKRTI) show a composition bias toward polar residues. Positions 34–43 (SSSSSSSSSS) are enriched in low complexity. Residues 69 to 84 (DHDRASPLKEYNRKTS) are compositionally biased toward basic and acidic residues. Residues 85–95 (IDSTTTASSEF) show a composition bias toward polar residues.

Belongs to the ODC antizyme family. In terms of assembly, interacts with ODC1 and thereby sterically blocks ODC homodimerization. In terms of tissue distribution, preferentially expressed in adult female midguts.

Functionally, ornithine decarboxylase (ODC) antizyme protein that negatively regulates ODC activity and intracellular polyamine biosynthesis and uptake in response to increased intracellular polyamine levels. Binds to ODC monomers, inhibiting the assembly of the functional ODC homodimer, and targets the monomers for ubiquitin-independent proteolytic destruction by the 26S proteasome. The chain is Ornithine decarboxylase antizyme (Oda) from Aedes aegypti (Yellowfever mosquito).